The following is a 128-amino-acid chain: Putative pre-16S rRNA nuclease (128 aa).

It belongs to the YqgF nuclease family.

It localises to the cytoplasm. Functionally, could be a nuclease involved in processing of the 5'-end of pre-16S rRNA. In Campylobacter lari (strain RM2100 / D67 / ATCC BAA-1060), this protein is Putative pre-16S rRNA nuclease.